The primary structure comprises 72 residues: Translation initiation factor IF-1 (72 aa).

The region spanning 1–72 is the S1-like domain; that stretch reads MTKEEVLEFP…TKGRITYRFK (72 aa).

This sequence belongs to the IF-1 family. In terms of assembly, component of the 30S ribosomal translation pre-initiation complex which assembles on the 30S ribosome in the order IF-2 and IF-3, IF-1 and N-formylmethionyl-tRNA(fMet); mRNA recruitment can occur at any time during PIC assembly.

Its subcellular location is the cytoplasm. Its function is as follows. One of the essential components for the initiation of protein synthesis. Stabilizes the binding of IF-2 and IF-3 on the 30S subunit to which N-formylmethionyl-tRNA(fMet) subsequently binds. Helps modulate mRNA selection, yielding the 30S pre-initiation complex (PIC). Upon addition of the 50S ribosomal subunit IF-1, IF-2 and IF-3 are released leaving the mature 70S translation initiation complex. The protein is Translation initiation factor IF-1 of Agrobacterium fabrum (strain C58 / ATCC 33970) (Agrobacterium tumefaciens (strain C58)).